A 96-amino-acid chain; its full sequence is YcgL domain-containing protein Csal_1462 (96 aa).

The YcgL domain occupies 4-88 (RLCEIFKSPR…ARESYLLDLY (85 aa)).

This is YcgL domain-containing protein Csal_1462 from Chromohalobacter salexigens (strain ATCC BAA-138 / DSM 3043 / CIP 106854 / NCIMB 13768 / 1H11).